The chain runs to 78 residues: Translation initiation factor IF-1, chloroplastic (78 aa).

In terms of domain architecture, S1-like spans 1-72 (MEKQNLIDME…TKGRITYRLR (72 aa)).

The protein belongs to the IF-1 family. As to quaternary structure, component of the 30S ribosomal translation pre-initiation complex which assembles on the 30S ribosome in the order IF-2 and IF-3, IF-1 and N-formylmethionyl-tRNA(fMet); mRNA recruitment can occur at any time during PIC assembly.

It is found in the plastid. It localises to the chloroplast. Its function is as follows. One of the essential components for the initiation of protein synthesis. Stabilizes the binding of IF-2 and IF-3 on the 30S subunit to which N-formylmethionyl-tRNA(fMet) subsequently binds. Helps modulate mRNA selection, yielding the 30S pre-initiation complex (PIC). Upon addition of the 50S ribosomal subunit IF-1, IF-2 and IF-3 are released leaving the mature 70S translation initiation complex. The chain is Translation initiation factor IF-1, chloroplastic from Anthoceros angustus (Hornwort).